The primary structure comprises 566 residues: Hexose transporter 2 (566 aa).

Residues 1–39 form a disordered region; it reads MSELETGTAAHGTPVENKSVSSSQASTPTNVGSRDDLKV. A compositionally biased stretch (polar residues) spans 16–32; sequence ENKSVSSSQASTPTNVG. Over 22-61 the chain is Cytoplasmic; the sequence is SSQASTPTNVGSRDDLKVDDDNHSVDAIELPKKPRSAYIT. Residues 62 to 82 traverse the membrane as a helical segment; sequence VSILCLMVAFGGFVFGWDTGT. At 83 to 112 the chain is on the extracellular side; sequence ISGFVNQTDFIRRFGQEKADGSHYLSNVRT. An N-linked (GlcNAc...) asparagine glycan is attached at Asn88. The helical transmembrane segment at 113–133 threads the bilayer; it reads GLIVSIFNIGCAIGGIILSKL. Topologically, residues 134–140 are cytoplasmic; sequence GDMYGRR. A helical transmembrane segment spans residues 141 to 161; that stretch reads IGLMIVVLIYVVGIIIQIASI. At 162–166 the chain is on the extracellular side; the sequence is DKWYQ. A helical membrane pass occupies residues 167-187; sequence YFIGRIISGLGVGGISVLSPM. Residues 188 to 198 are Cytoplasmic-facing; the sequence is LISETAPKHIR. Residues 199 to 219 form a helical membrane-spanning segment; the sequence is GTLVSFYQLMITFGIFLGYCT. The Extracellular portion of the chain corresponds to 220–233; it reads NYGTKTYSNSVQWR. A helical transmembrane segment spans residues 234–254; sequence VPLGLCFAWAIFMITGMLFVP. Residues 255–333 are Cytoplasmic-facing; the sequence is ESPRFLVEKD…MGMLIQSFQQ (79 aa). Residues 334-353 traverse the membrane as a helical segment; the sequence is LTGNNYFFYYGTTIFNSVGM. Residues 354-357 are Extracellular-facing; that stretch reads DDSF. The chain crosses the membrane as a helical span at residues 358–378; sequence ETSIVLGIVNFASTFVAIYVV. Residues 379 to 385 lie on the Cytoplasmic side of the membrane; sequence DKFGRRK. A helical membrane pass occupies residues 386 to 406; that stretch reads CLLWGAAAMTACMVVFASVGV. The Extracellular segment spans residues 407 to 428; that stretch reads TRLWPDGANHPETASKGAGNCM. A helical membrane pass occupies residues 429–449; the sequence is IVFACFYIFCFATSWAPIAYV. Residues 450 to 465 lie on the Cytoplasmic side of the membrane; the sequence is VVAESYPLRVKAKCMA. Residues 466–486 form a helical membrane-spanning segment; sequence IATASNWIWGFLNGFFTPFIT. Over 487-492 the chain is Extracellular; the sequence is SAIHFY. Residues 493 to 513 form a helical membrane-spanning segment; the sequence is YGYVFMGCLVAMFFYVFFFVP. Topologically, residues 514-566 are cytoplasmic; that stretch reads ETKGLTLEEVQEMWEEGVLPWKSSSWVPSSRRNAGYDVDALQHDEKPWYKAML.

This sequence belongs to the major facilitator superfamily. Sugar transporter (TC 2.A.1.1) family.

Its subcellular location is the membrane. In terms of biological role, probable glucose transporter. The protein is Hexose transporter 2 (KHT2) of Kluyveromyces lactis (Yeast).